The sequence spans 306 residues: Putative transcriptional regulator (306 aa).

Residues 1 to 61 (MIKRNLNDLL…TRTTRSVSPT (61 aa)) form the HTH lysR-type domain. Residues 21-40 (FTRAAAQLGVTQSALSQSIS) constitute a DNA-binding region (H-T-H motif).

It belongs to the LysR transcriptional regulatory family.

In terms of biological role, may have a role in the regulation of oprD expression. This chain is Putative transcriptional regulator, found in Pseudomonas aeruginosa (strain ATCC 15692 / DSM 22644 / CIP 104116 / JCM 14847 / LMG 12228 / 1C / PRS 101 / PAO1).